A 756-amino-acid chain; its full sequence is Rab11 family-interacting protein 3 (756 aa).

The segment covering 1–24 has biased composition (pro residues); the sequence is MASAPPASPPGSEPPGPDPEPGGP. A disordered region spans residues 1–204; that stretch reads MASAPPASPP…SEPVGSQEDG (204 aa). Residues 2-435 are important for binding to DYNC1LI1; that stretch reads ASAPPASPPG…RLSSKKVARY (434 aa). The span at 27 to 39 shows a compositional bias: low complexity; sequence PGAAQLAPGPAEL. A Phosphoserine modification is found at serine 52. Over residues 53–68 the composition is skewed to low complexity; the sequence is PGLDEPAPGAAADGGA. Positions 84–94 are enriched in pro residues; sequence DPGPSAPPPRS. Serine 102 is subject to Phosphoserine; by CDK1. EF-hand domains follow at residues 202–237 and 234–269; these read EDGP…YGAE and YGAE…IRNG. The Ca(2+) site is built by aspartate 215, aspartate 217, aspartate 219, aspartate 226, aspartate 247, serine 249, and aspartate 258. A phosphoserine mark is found at serine 281, serine 348, serine 488, serine 538, serine 647, and serine 648. Residues 484 to 588 are ARF-binding domain (ABD); that stretch reads GEQHSRLRQE…LLDEIESLTL (105 aa). Residues 485–694 adopt a coiled-coil conformation; sequence EQHSRLRQEN…NGQIITLSIQ (210 aa). The disordered stretch occupies residues 645–664; sequence RSSSMGLQEYHSRARESELE. Positions 654–664 are enriched in basic and acidic residues; that stretch reads YHSRARESELE. The FIP-RBD domain occupies 694–756; sequence QGAKSLFSTA…ETNPSILEVK (63 aa).

In terms of assembly, homodimer. Interacts with RAB11A; the interaction is direct and is required for the recruitment to endosomes. Interacts with RAB11B. Forms a ternary complex with RAB11A and dynein intermediate chain DYNC1LI1; RAB11FIP3 links RAB11A to dynein and the interaction regulates endocytic trafficking. Interacts with dynein intermediate chain and dynactin (DCTN1); the interaction activates dynein processivity. Interacts with ARF6 and EXOC7; the interaction serves for recruitment and tethering of recycling endosomes-derived vesicles to the cleavage furrow/midbody. Interacts with RACGAP1/MgcRacGAP; the interaction occurs at late telophase and is required for recruitment and tethering of recycling endosomes-derived vesicles to the cleavage furrow/midbody. Forms a complex with RAB11A and Rabin8/RAB3IP, probably a heterohexamer with two of each protein subunit, where RAB3IP and RAB11FIP3 simultaneously bind to RAB11A; the complex promotes preciliary trafficking. Forms a complex containing RAB11A, ASAP1, RAB3IP, RAP11FIP3 and ARF4; the complex promotes preciliary trafficking; the complex binds to RHO in photoreceptor cells and promotes RHO ciliary transport. Interacts with RAB11FIP4. Interacts with RAB25. In terms of processing, phosphorylated at Ser-102 by CDK1 during metaphase, and dephosphorylated as cells enter telophase.

It localises to the endosome membrane. The protein resides in the recycling endosome membrane. Its subcellular location is the cytoplasm. It is found in the cytoskeleton. The protein localises to the microtubule organizing center. It localises to the centrosome. The protein resides in the cleavage furrow. Its subcellular location is the midbody. It is found in the golgi apparatus membrane. The protein localises to the golgi apparatus. It localises to the trans-Golgi network membrane. Functionally, downstream effector molecule for Rab11 GTPase which is involved in endocytic trafficking, cytokinesis and intracellular ciliogenesis by participating in membrane delivery. Recruited by Rab11 to endosomes where it links Rab11 to dynein motor complex. The functional Rab11-RAB11FIP3-dynein complex regulates the movement of peripheral sorting endosomes (SE) along microtubule tracks toward the microtubule organizing center/centrosome, generating the endocytic recycling compartment (ERC) during interphase of cell cycle. Facilitates the interaction between dynein and dynactin and activates dynein processivity. Binding with ASAP1 is needed to regulate the pericentrosomal localization of recycling endosomes. The Rab11-RAB11FIP3 complex is also implicated in the transport during telophase of vesicles derived from recycling endosomes to the cleavage furrow via centrosome-anchored microtubules, where the vesicles function to deliver membrane during late cytokinesis and abscission. The recruitment of Rab11-RAB11FIP3-containing endosomes to the cleavage furrow and tethering to the midbody is co-mediated by RAB11FIP3 interaction with ARF6-exocyst and RACGAP1-MKLP1 tethering complexes. Also involved in the Rab11-Rabin8-Rab8 ciliogenesis cascade by facilitating the orderly assembly of a ciliary targeting complex containing Rab11, ASAP1, Rabin8/RAB3IP, RAB11FIP3 and ARF4, which directs preciliary vesicle trafficking to mother centriole and ciliogenesis initiation. Also promotes the activity of Rab11 and ASAP1 in the ARF4-dependent Golgi-to-cilia transport of the sensory receptor rhodopsin. Competes with WDR44 for binding to Rab11, which controls intracellular ciliogenesis pathway. May play a role in breast cancer cell motility by regulating actin cytoskeleton. This Homo sapiens (Human) protein is Rab11 family-interacting protein 3.